Here is a 438-residue protein sequence, read N- to C-terminus: L-cysteine:1D-myo-inositol 2-amino-2-deoxy-alpha-D-glucopyranoside ligase (438 aa).

Residues 1–27 (MKSWSSRPVPELPGTGTAPRVHDTSTG) are disordered. Cys-44 provides a ligand contact to Zn(2+). Residues 44 to 47 (CGIT), Thr-59, and 82 to 84 (NVT) each bind L-cysteinyl-5'-AMP. Residues 46-56 (ITPYDATHMGH) carry the 'HIGH' region motif. Positions 208-213 (DHGGDP) match the 'ERGGDP' region motif. Trp-249 serves as a coordination point for L-cysteinyl-5'-AMP. Zn(2+) is bound at residue Cys-253. Residue 271–273 (GSD) participates in L-cysteinyl-5'-AMP binding. A Zn(2+)-binding site is contributed by His-278. Val-304 serves as a coordination point for L-cysteinyl-5'-AMP. Residues 310 to 314 (KMSKS) carry the 'KMSKS' region motif.

The protein belongs to the class-I aminoacyl-tRNA synthetase family. MshC subfamily. In terms of assembly, monomer. Requires Zn(2+) as cofactor.

The catalysed reaction is 1D-myo-inositol 2-amino-2-deoxy-alpha-D-glucopyranoside + L-cysteine + ATP = 1D-myo-inositol 2-(L-cysteinylamino)-2-deoxy-alpha-D-glucopyranoside + AMP + diphosphate + H(+). Functionally, catalyzes the ATP-dependent condensation of GlcN-Ins and L-cysteine to form L-Cys-GlcN-Ins. The protein is L-cysteine:1D-myo-inositol 2-amino-2-deoxy-alpha-D-glucopyranoside ligase of Kocuria rhizophila (strain ATCC 9341 / DSM 348 / NBRC 103217 / DC2201).